The following is a 276-amino-acid chain: CTD small phosphatase-like protein (276 aa).

Positions Met1–Glu25 are disordered. Positions Leu102–Leu260 constitute an FCP1 homology domain. Asp112 (4-aspartylphosphate intermediate) is an active-site residue. Mg(2+) is bound by residues Asp112, Asp114, and Asn223. Residue Asp114 is the Proton donor of the active site.

As to quaternary structure, interacts with REST. Monomer. The cofactor is Mg(2+). Expression is restricted to non-neuronal tissues.

It is found in the nucleus. The enzyme catalyses O-phospho-L-seryl-[protein] + H2O = L-seryl-[protein] + phosphate. It catalyses the reaction O-phospho-L-threonyl-[protein] + H2O = L-threonyl-[protein] + phosphate. Recruited by REST to neuronal genes that contain RE-1 elements, leading to neuronal gene silencing in non-neuronal cells. Preferentially catalyzes the dephosphorylation of 'Ser-5' within the tandem 7 residue repeats in the C-terminal domain (CTD) of the largest RNA polymerase II subunit POLR2A. Negatively regulates RNA polymerase II transcription, possibly by controlling the transition from initiation/capping to processive transcript elongation. This Homo sapiens (Human) protein is CTD small phosphatase-like protein (CTDSPL).